A 265-amino-acid polypeptide reads, in one-letter code: Apolipoprotein A-I (265 aa).

A signal peptide spans 1-18 (MKAVVLTLAVLFLTGSQA). Repeat copies occupy residues 67-88 (LKLLDNWDSLGSTFTKVREQLG) and 89-110 (PVTQEFWDNLEKETEALRQEMS). Positions 67 to 265 (LKLLDNWDSL…DEASKKLNAQ (199 aa)) are 10 X approximate tandem repeats. M109 is subject to Methionine sulfoxide. A 3; half-length repeat occupies 111 to 121 (KDLEEVKKKVQ). A run of 5 repeats spans residues 122 to 142 (PYLDDFQNKWQEEMETYRQKM), 144 to 165 (PLGAEFREGARQKVQELQEKLS), 166 to 187 (PLAEELRDRLRAHVEALRQHVA), 188 to 209 (PYSDDLRQRMAARFEALKEGGG), and 210 to 230 (SLAEYQAKAQEQLKALGEKAK). M135 is subject to Methionine sulfoxide. The stretch at 231–241 (PALEDLRQGLL) is one 9; half-length repeat. Copy 10 of the repeat occupies 242–265 (PVLENLKVSILAAIDEASKKLNAQ).

Belongs to the apolipoprotein A1/A4/E family. In terms of assembly, homodimer. Interacts with APOA1BP and CLU. Component of a sperm activating protein complex (SPAP), consisting of APOA1, an immunoglobulin heavy chain, an immunoglobulin light chain and albumin. Interacts with NDRG1. Interacts with SCGB3A2. Interacts with NAXE and YJEFN3. Glycosylated. Post-translationally, palmitoylated. In terms of processing, phosphorylation sites are present in the extracellular medium. Major protein of plasma HDL, also found in chylomicrons. Synthesized predominantly in the intestine and the liver.

Its subcellular location is the secreted. Functionally, participates in the reverse transport of cholesterol from tissues to the liver for excretion by promoting cholesterol efflux from tissues and by acting as a cofactor for the lecithin cholesterol acyltransferase (LCAT). As part of the SPAP complex, activates spermatozoa motility. In Sus scrofa (Pig), this protein is Apolipoprotein A-I (APOA1).